The sequence spans 430 residues: Trigger factor (430 aa).

The 86-residue stretch at 157–242 (GDLVALETWS…AVEVSEPVLP (86 aa)) folds into the PPIase FKBP-type domain.

The protein belongs to the FKBP-type PPIase family. Tig subfamily.

The protein localises to the cytoplasm. The enzyme catalyses [protein]-peptidylproline (omega=180) = [protein]-peptidylproline (omega=0). In terms of biological role, involved in protein export. Acts as a chaperone by maintaining the newly synthesized protein in an open conformation. Functions as a peptidyl-prolyl cis-trans isomerase. The polypeptide is Trigger factor (Xanthomonas axonopodis pv. citri (strain 306)).